Consider the following 336-residue polypeptide: Fructose-1,6-bisphosphatase class 1 (336 aa).

Mg(2+) contacts are provided by glutamate 90, aspartate 112, leucine 114, and aspartate 115. Substrate is bound by residues 115-118 (DGSS), asparagine 211, and lysine 277. A Mg(2+)-binding site is contributed by glutamate 283.

It belongs to the FBPase class 1 family. In terms of assembly, homotetramer. It depends on Mg(2+) as a cofactor.

It is found in the cytoplasm. It carries out the reaction beta-D-fructose 1,6-bisphosphate + H2O = beta-D-fructose 6-phosphate + phosphate. The protein operates within carbohydrate biosynthesis; gluconeogenesis. In Pseudomonas aeruginosa (strain ATCC 15692 / DSM 22644 / CIP 104116 / JCM 14847 / LMG 12228 / 1C / PRS 101 / PAO1), this protein is Fructose-1,6-bisphosphatase class 1.